The following is an 81-amino-acid chain: Extracellular matrix regulatory protein B (81 aa).

Its function is as follows. Regulates the biosynthesis of the extracellular matrix and the biofilm formation. May act as an enhancer of biofilm gene expression. Acts in parallel to the pathway that governs SinR derepression. The polypeptide is Extracellular matrix regulatory protein B (Bacillus subtilis (strain 168)).